A 234-amino-acid polypeptide reads, in one-letter code: Synaptogyrin-4 (234 aa).

The MARVEL domain maps to 18-169; that stretch reads FLKRPKAITR…QAYLAFQELR (152 aa). Helical transmembrane passes span 25–45, 66–86, 104–124, and 145–165; these read ITRI…LTDG, CSIA…FLAL, LLDL…FCFL, and AAIT…YLAF. The interval 191–226 is disordered; sequence SPPSAASPVNTPTTGPHGPSYASSSLSPYLSTPKAP. The segment covering 209 to 221 has biased composition (low complexity); that stretch reads PSYASSSLSPYLS.

The protein belongs to the synaptogyrin family.

It is found in the membrane. This is Synaptogyrin-4 (SYNGR4) from Bos taurus (Bovine).